A 149-amino-acid chain; its full sequence is Protein K7 (149 aa).

This sequence belongs to the orthopoxvirus OPG044 family. As to quaternary structure, interacts with DDX3; this interaction inhibits DDX3 and suppresses DDX3-mediated IFN-beta promoter induction. Interacts with TRAF6 and IRAK2; these interactions suppress TLR-dependent NF-KappaB activation.

The protein localises to the host cytoplasm. Functionally, virulence factor that affects the acute immune response to infection. Bcl-2-like protein which, through its interaction with the DEAD box RNA helicase DDX3X/DDX3, prevents TBK1/IKKepsilon-mediated IRF3 activation. Contributes to virulence by binding to the host TRAF6 and IRAK2 and preventing host NF-kappa-B activation. The protein is Protein K7 (OPG044) of Cynomys gunnisoni (Gunnison's prairie dog).